We begin with the raw amino-acid sequence, 89 residues long: Small ribosomal subunit protein uS15 (89 aa).

This sequence belongs to the universal ribosomal protein uS15 family. As to quaternary structure, part of the 30S ribosomal subunit. Forms a bridge to the 50S subunit in the 70S ribosome, contacting the 23S rRNA.

One of the primary rRNA binding proteins, it binds directly to 16S rRNA where it helps nucleate assembly of the platform of the 30S subunit by binding and bridging several RNA helices of the 16S rRNA. Functionally, forms an intersubunit bridge (bridge B4) with the 23S rRNA of the 50S subunit in the ribosome. The sequence is that of Small ribosomal subunit protein uS15 from Treponema denticola (strain ATCC 35405 / DSM 14222 / CIP 103919 / JCM 8153 / KCTC 15104).